We begin with the raw amino-acid sequence, 390 residues long: MKATGIVVEYNPFHNGHKLHLNKARELTQADVVIAVMSGSFVQRGEPAIIPKWERAKMALSAGVDMVVELPVSFATQHATIFAEEAVRILDAIHIDTLFFGSEHGVAEDFTFAAKKVVENEARFDEAIQLALVDKKTSYARAYTEAFKKLFGQNLLDITKPNNILGFHYALAVQKQNPSISLQTIPREHAGYHDEEASHDQIASATAIRKLILAGKLEEASHYLPASSIDILRNYEGPFLSWTDYWSFLQYRLIQASTEELEGIRGVSEGIQNRMQQAATKAQNFSDFIELTKTKRYSNARLQRTALQILLNAKSKASSPYIRILGMNKTGQKYLSLHKKNISLPIVTTVSKAPPGLLEEELRATNIYTLVKKLENYQAGDFHIPPILTL.

Residues 7-20, Gly101, Asn162, and Arg187 each bind ATP; that span reads VVEY…HKLH.

Belongs to the TmcAL family.

The protein localises to the cytoplasm. The catalysed reaction is cytidine(34) in elongator tRNA(Met) + acetate + ATP = N(4)-acetylcytidine(34) in elongator tRNA(Met) + AMP + diphosphate. Catalyzes the formation of N(4)-acetylcytidine (ac(4)C) at the wobble position of elongator tRNA(Met), using acetate and ATP as substrates. First activates an acetate ion to form acetyladenylate (Ac-AMP) and then transfers the acetyl group to tRNA to form ac(4)C34. The chain is tRNA(Met) cytidine acetate ligase from Listeria monocytogenes serovar 1/2a (strain ATCC BAA-679 / EGD-e).